The sequence spans 410 residues: Class E basic helix-loop-helix protein 41 (410 aa).

A Glycyl lysine isopeptide (Lys-Gly) (interchain with G-Cter in SUMO2) cross-link involves residue K31. The bHLH domain maps to 44–99; sequence TYKLPHRLIEKKRRDRINECIAQLKDLLPEHLKLTTLGHLEKAVVLELTLKHLKAL. K121 is covalently cross-linked (Glycyl lysine isopeptide (Lys-Gly) (interchain with G-Cter in SUMO2)). Residues 131 to 166 form the Orange domain; it reads FHSGFQTCAKEVLQYLARFESWTPREPRCAQLVSHL. Disordered stretches follow at residues 209-255 and 360-410; these read IQRT…KRPK and GATA…KDAP. K240 is covalently cross-linked (Glycyl lysine isopeptide (Lys-Gly) (interchain with G-Cter in SUMO2)).

Homodimer. Heterodimer with BHLHE40/DEC1. Interacts with CIART. Interacts with BMAL1. Interacts with RXRA. Interacts with NR0B2 and HNF1A. Expressed in skeletal muscle, brain and lung.

The protein localises to the nucleus. Its function is as follows. Transcriptional repressor involved in the regulation of the circadian rhythm by negatively regulating the activity of the clock genes and clock-controlled genes. Acts as the negative limb of a novel autoregulatory feedback loop (DEC loop) which differs from the one formed by the PER and CRY transcriptional repressors (PER/CRY loop). Both these loops are interlocked as it represses the expression of PER1 and in turn is repressed by PER1/2 and CRY1/2. Represses the activity of the circadian transcriptional activator: CLOCK-BMAL1 heterodimer by competing for the binding to E-box elements (5'-CACGTG-3') found within the promoters of its target genes. Negatively regulates its own expression and the expression of DBP and BHLHE41/DEC2. Acts as a corepressor of RXR and the RXR-LXR heterodimers and represses the ligand-induced RXRA/B/G, NR1H3/LXRA, NR1H4 and VDR transactivation activity. Inhibits HNF1A-mediated transactivation of CYP1A2, CYP2E1 and CYP3A11. In Mus musculus (Mouse), this protein is Class E basic helix-loop-helix protein 41 (Bhlhe41).